We begin with the raw amino-acid sequence, 64 residues long: Alpha-conotoxin SI (64 aa).

A signal peptide spans 1–21; it reads MGMRMMFTVFLLVVLATTVVS. The propeptide occupies 22 to 49; it reads FPSDRASDGRDDEAKDERSDMHESDRKE. A disordered region spans residues 23–47; the sequence is PSDRASDGRDDEAKDERSDMHESDR. Basic and acidic residues predominate over residues 26 to 47; the sequence is RASDGRDDEAKDERSDMHESDR. Intrachain disulfides connect cysteine 51–cysteine 56 and cysteine 52–cysteine 62. Cysteine 62 bears the Cysteine amide mark.

The protein belongs to the conotoxin A superfamily. In terms of tissue distribution, expressed by the venom duct.

The protein resides in the secreted. Its function is as follows. Alpha-conotoxins act on postsynaptic membranes, they bind to the nicotinic acetylcholine receptors (nAChR) and thus inhibit them. Is active on muscle nAChR (IC(50)=113 nM on adult subtype (alpha-1-beta-1-gamma-delta/CHRNA1-CHRNB1-CHRNG-CHRND) and IC(50)=142 nM on fetal subtype (alpha-1-beta-1-delta-epsilon/CHRNA1-CHRNB1-CHRND-CHRNE)). On mice muscle receptors, its higher affinity site is the alpha/delta nAChR subunit interface. On Torpedo receptors, it does not distinguish between alpha/delta and alpha/gamma acetylcholine-binding sites. In vivo, causes paralysis followed by death when injected into goldfish. In contrast, has no effect on mice, when similar doses are intraperitoneally or intracerebrally injected. The sequence is that of Alpha-conotoxin SI from Conus striatus (Striated cone).